Consider the following 399-residue polypeptide: Formate-dependent phosphoribosylglycinamide formyltransferase (399 aa).

N(1)-(5-phospho-beta-D-ribosyl)glycinamide contacts are provided by residues 21–22 and glutamate 81; that span reads EL. ATP is bound by residues arginine 114, lysine 156, 161–166, 196–199, and glutamate 204; these read SSGKGQ and EGFI. Residues 119–314 form the ATP-grasp domain; it reads RLAAEELGLP…EFELHARAIL (196 aa). Residues glutamate 273 and glutamate 285 each contribute to the Mg(2+) site. N(1)-(5-phospho-beta-D-ribosyl)glycinamide contacts are provided by residues aspartate 292, lysine 361, and 368–369; that span reads RR. Residues 370-399 form a disordered region; that stretch reads MGVAVANGESTDQARERAKLAASKVRPTRT.

The protein belongs to the PurK/PurT family. As to quaternary structure, homodimer.

The catalysed reaction is N(1)-(5-phospho-beta-D-ribosyl)glycinamide + formate + ATP = N(2)-formyl-N(1)-(5-phospho-beta-D-ribosyl)glycinamide + ADP + phosphate + H(+). Its pathway is purine metabolism; IMP biosynthesis via de novo pathway; N(2)-formyl-N(1)-(5-phospho-D-ribosyl)glycinamide from N(1)-(5-phospho-D-ribosyl)glycinamide (formate route): step 1/1. Functionally, involved in the de novo purine biosynthesis. Catalyzes the transfer of formate to 5-phospho-ribosyl-glycinamide (GAR), producing 5-phospho-ribosyl-N-formylglycinamide (FGAR). Formate is provided by PurU via hydrolysis of 10-formyl-tetrahydrofolate. This Dechloromonas aromatica (strain RCB) protein is Formate-dependent phosphoribosylglycinamide formyltransferase.